The sequence spans 29 residues: Cytochrome b6-f complex subunit 8 (29 aa).

Residues 3 to 23 form a helical membrane-spanning segment; that stretch reads IVSLGWAFLMVVFSFSLSLVV.

This sequence belongs to the PetN family. The 4 large subunits of the cytochrome b6-f complex are cytochrome b6, subunit IV (17 kDa polypeptide, PetD), cytochrome f and the Rieske protein, while the 4 small subunits are PetG, PetL, PetM and PetN. The complex functions as a dimer.

The protein localises to the plastid. Its subcellular location is the chloroplast thylakoid membrane. Functionally, component of the cytochrome b6-f complex, which mediates electron transfer between photosystem II (PSII) and photosystem I (PSI), cyclic electron flow around PSI, and state transitions. This chain is Cytochrome b6-f complex subunit 8, found in Chlorokybus atmophyticus (Soil alga).